We begin with the raw amino-acid sequence, 156 residues long: Large ribosomal subunit protein uL22c (156 aa).

Belongs to the universal ribosomal protein uL22 family. In terms of assembly, part of the 50S ribosomal subunit.

Its subcellular location is the plastid. It is found in the chloroplast. This protein binds specifically to 23S rRNA. Its function is as follows. The globular domain of the protein is located near the polypeptide exit tunnel on the outside of the subunit, while an extended beta-hairpin is found that lines the wall of the exit tunnel in the center of the 70S ribosome. The protein is Large ribosomal subunit protein uL22c (rpl22) of Buxus microphylla (Littleleaf boxwood).